The following is a 432-amino-acid chain: Neuronal pentraxin-1 (432 aa).

The N-terminal stretch at 1 to 22 is a signal peptide; that stretch reads MPAGRAARTCALLALCLLGAGA. The tract at residues 90–122 is disordered; sequence ESQSTLDPGAGEARAGGGRKQPGSGKNTMGDLS. Asparagine 154 and asparagine 193 each carry an N-linked (GlcNAc...) asparagine glycan. The region spanning 226 to 428 is the Pentraxin (PTX) domain; it reads DKFQLTFPLR…GATKWTFEAC (203 aa). Residues cysteine 256 and cysteine 316 are joined by a disulfide bond. 5 residues coordinate Ca(2+): asparagine 280, glutamate 358, glutamine 359, aspartate 360, and glutamine 370.

As to quaternary structure, homooligomer or heterooligomer (probably pentamer) with neuronal pentraxin receptor (NPTXR). The cofactor is Ca(2+).

The protein localises to the secreted. It is found in the cytoplasmic vesicle. The protein resides in the secretory vesicle. Its subcellular location is the endoplasmic reticulum. May be involved in mediating uptake of synaptic material during synapse remodeling or in mediating the synaptic clustering of AMPA glutamate receptors at a subset of excitatory synapses. This Homo sapiens (Human) protein is Neuronal pentraxin-1 (NPTX1).